The chain runs to 281 residues: Undecaprenyl-diphosphatase (281 aa).

The next 7 helical transmembrane spans lie at 4-24, 46-63, 83-103, 108-128, 187-207, 222-242, and 257-277; these read ILLL…FLPI, AFEV…CWEF, FVLN…LFGK, VLFS…IIFW, AVAT…ATAY, EFTL…FVCV, and FAWY…TGLI.

This sequence belongs to the UppP family.

It localises to the cell inner membrane. The catalysed reaction is di-trans,octa-cis-undecaprenyl diphosphate + H2O = di-trans,octa-cis-undecaprenyl phosphate + phosphate + H(+). Catalyzes the dephosphorylation of undecaprenyl diphosphate (UPP). Confers resistance to bacitracin. The polypeptide is Undecaprenyl-diphosphatase (Polynucleobacter necessarius subsp. necessarius (strain STIR1)).